A 278-amino-acid polypeptide reads, in one-letter code: uncharacterized protein (278 aa).

It is found in the cytoplasm. Its subcellular location is the nucleus. Functionally, probable methyltransferase. This is an uncharacterized protein from Schizosaccharomyces pombe (strain 972 / ATCC 24843) (Fission yeast).